Reading from the N-terminus, the 60-residue chain is Large ribosomal subunit protein uL30 (60 aa).

This sequence belongs to the universal ribosomal protein uL30 family. In terms of assembly, part of the 50S ribosomal subunit.

This is Large ribosomal subunit protein uL30 from Aromatoleum aromaticum (strain DSM 19018 / LMG 30748 / EbN1) (Azoarcus sp. (strain EbN1)).